A 502-amino-acid chain; its full sequence is Probable cytosol aminopeptidase (502 aa).

2 residues coordinate Mn(2+): Lys-269 and Asp-274. Lys-281 is an active-site residue. 3 residues coordinate Mn(2+): Asp-292, Asp-351, and Glu-353. Residue Arg-355 is part of the active site.

The protein belongs to the peptidase M17 family. Requires Mn(2+) as cofactor.

It is found in the cytoplasm. It carries out the reaction Release of an N-terminal amino acid, Xaa-|-Yaa-, in which Xaa is preferably Leu, but may be other amino acids including Pro although not Arg or Lys, and Yaa may be Pro. Amino acid amides and methyl esters are also readily hydrolyzed, but rates on arylamides are exceedingly low.. It catalyses the reaction Release of an N-terminal amino acid, preferentially leucine, but not glutamic or aspartic acids.. Presumably involved in the processing and regular turnover of intracellular proteins. Catalyzes the removal of unsubstituted N-terminal amino acids from various peptides. The chain is Probable cytosol aminopeptidase from Shewanella sediminis (strain HAW-EB3).